Here is a 424-residue protein sequence, read N- to C-terminus: Probable biofilm formation methyltransferase WspC (424 aa).

A CheR-type methyltransferase domain is found at 1–263; that stretch reads MNEQRFFRFL…IAQSFAYVRH (263 aa). S-adenosyl-L-methionine-binding positions include Thr-68, Arg-72, Glu-109, Asp-133, 187–188, and 206–207; these read NV and RN. Residues 355–388 form a TPR repeat; sequence AQVYYWLGLLSDTEGDAQQALSHYRKALYLEPQH.

In terms of assembly, monomer. The TPR repeat does not mediate self-association.

Involved in biofilm formation. This is Probable biofilm formation methyltransferase WspC (wspC) from Pseudomonas putida (strain ATCC 47054 / DSM 6125 / CFBP 8728 / NCIMB 11950 / KT2440).